A 475-amino-acid chain; its full sequence is Subtilisin-like protease PopC (475 aa).

Disordered regions lie at residues 1–27 and 57–106; these read MKSYLLVPKESIETQARVGPRGTEQGE and TLPG…QTGA. The Peptidase S8 domain maps to 165–475; that stretch reads NRGMSSLAER…KTGKGLAVFR (311 aa). Catalysis depends on charge relay system residues Asp201, His243, and Ser423.

Belongs to the peptidase S8 family. As to quaternary structure, interacts with PopD in non-starving cells.

Its subcellular location is the cytoplasm. The protein localises to the periplasm. The protein resides in the secreted. Its activity is regulated as follows. In non-starving cells, secretion and protease activity are inhibited by formation of a cytoplasmic complex with PopD. In response to starvation, PopD is degraded in a RelA- and FtsH(D)-dependent manner, thereby releasing pre-formed PopC for secretion. Secreted and active during starvation, and rapidly degraded upon secretion. Secretion is significantly and reversibly reduced by carbonyl cyanide m-chlorophenyl hydrazine (CCCP), which dissipates or reduces the proton motive force (PMF), and by nigericin, which affects the pH gradient. Functionally, required for fruiting body formation, a multicellular developmental program that is induced in response to starvation. Acts as a subtilisin-like protease that directly cleaves the CsgA precursor protein (p25) on the cell surface to generate the intercellular C-signal protein (p17) in starving cells. Preferentially acts in cis, i.e. PopC secreted by a cell only cleaves p25 on that cell. May also be important for processing of other protein(s) that are important for development. This is Subtilisin-like protease PopC from Myxococcus xanthus (strain DK1622).